We begin with the raw amino-acid sequence, 256 residues long: tRNA pseudouridine synthase A (256 aa).

Aspartate 55 (nucleophile) is an active-site residue. Substrate is bound at residue tyrosine 113.

The protein belongs to the tRNA pseudouridine synthase TruA family. As to quaternary structure, homodimer.

The enzyme catalyses uridine(38/39/40) in tRNA = pseudouridine(38/39/40) in tRNA. Formation of pseudouridine at positions 38, 39 and 40 in the anticodon stem and loop of transfer RNAs. This is tRNA pseudouridine synthase A from Limosilactobacillus reuteri (strain DSM 20016) (Lactobacillus reuteri).